The sequence spans 225 residues: UPF0758 protein BPP1850 (225 aa).

The MPN domain occupies 103-225; sequence ALANPDLVRR…TVSMAAQGHL (123 aa). Residues H174, H176, and D187 each coordinate Zn(2+). Positions 174 to 187 match the JAMM motif motif; that stretch reads HNHPGGTAAASAAD.

This sequence belongs to the UPF0758 family.

The protein is UPF0758 protein BPP1850 of Bordetella parapertussis (strain 12822 / ATCC BAA-587 / NCTC 13253).